Consider the following 257-residue polypeptide: Small ribosomal subunit protein uS2 (257 aa).

This sequence belongs to the universal ribosomal protein uS2 family.

This Bartonella henselae (strain ATCC 49882 / DSM 28221 / CCUG 30454 / Houston 1) (Rochalimaea henselae) protein is Small ribosomal subunit protein uS2.